A 327-amino-acid polypeptide reads, in one-letter code: Aldo-keto reductase family 1 member A1 (327 aa).

Residues 13-22 (GQKIPLIGLG), T23, W24, and D47 each bind NADP(+). The active-site Proton donor is Y52. NADP(+) contacts are provided by S164, N165, S213, L215, S217, K265, S266, V267, T268, R271, Q274, and N275.

The protein belongs to the aldo/keto reductase family.

Its subcellular location is the cytoplasm. It is found in the cytosol. It localises to the apical cell membrane. The enzyme catalyses a primary alcohol + NADP(+) = an aldehyde + NADPH + H(+). It catalyses the reaction S-nitroso-CoA + NADPH + H(+) = sulfinamide-CoA + NADP(+). The catalysed reaction is S-nitrosoglutathione + NADPH + H(+) = S-(hydroxysulfenamide)glutathione + NADP(+). Catalyzes the NADPH-dependent reduction of a wide variety of carbonyl-containing compounds to their corresponding alcohols. Displays enzymatic activity towards endogenous metabolites such as aromatic and aliphatic aldehydes, ketones, monosaccharides and bile acids. Acts as an aldehyde-detoxification enzyme. Also acts as an inhibitor of protein S-nitrosylation by mediating degradation of S-nitroso-coenzyme A (S-nitroso-CoA), a cofactor required to S-nitrosylate proteins. Also acts as a S-nitroso-glutathione reductase by catalyzing the NADPH-dependent reduction of S-nitrosoglutathione. Displays no reductase activity towards retinoids. This Gallus gallus (Chicken) protein is Aldo-keto reductase family 1 member A1 (AKR1A1).